Reading from the N-terminus, the 216-residue chain is ATP-dependent Clp protease proteolytic subunit (216 aa).

The active-site Nucleophile is S109. H134 is a catalytic residue.

Belongs to the peptidase S14 family. Fourteen ClpP subunits assemble into 2 heptameric rings which stack back to back to give a disk-like structure with a central cavity, resembling the structure of eukaryotic proteasomes.

The protein resides in the cytoplasm. The catalysed reaction is Hydrolysis of proteins to small peptides in the presence of ATP and magnesium. alpha-casein is the usual test substrate. In the absence of ATP, only oligopeptides shorter than five residues are hydrolyzed (such as succinyl-Leu-Tyr-|-NHMec, and Leu-Tyr-Leu-|-Tyr-Trp, in which cleavage of the -Tyr-|-Leu- and -Tyr-|-Trp bonds also occurs).. Cleaves peptides in various proteins in a process that requires ATP hydrolysis. Has a chymotrypsin-like activity. Plays a major role in the degradation of misfolded proteins. The chain is ATP-dependent Clp protease proteolytic subunit from Rhodospirillum rubrum (strain ATCC 11170 / ATH 1.1.1 / DSM 467 / LMG 4362 / NCIMB 8255 / S1).